Reading from the N-terminus, the 483-residue chain is Glutamate--tRNA ligase (483 aa).

The 'HIGH' region signature appears at 11 to 21; the sequence is PSPTGHLHIGN. The Zn(2+) site is built by cysteine 108, cysteine 110, cysteine 135, and histidine 137. Positions 252–256 match the 'KMSKS' region motif; the sequence is KLSKR. Position 255 (lysine 255) interacts with ATP.

This sequence belongs to the class-I aminoacyl-tRNA synthetase family. Glutamate--tRNA ligase type 1 subfamily. As to quaternary structure, monomer. It depends on Zn(2+) as a cofactor.

The protein resides in the cytoplasm. It catalyses the reaction tRNA(Glu) + L-glutamate + ATP = L-glutamyl-tRNA(Glu) + AMP + diphosphate. Its function is as follows. Catalyzes the attachment of glutamate to tRNA(Glu) in a two-step reaction: glutamate is first activated by ATP to form Glu-AMP and then transferred to the acceptor end of tRNA(Glu). This chain is Glutamate--tRNA ligase, found in Bacillus pumilus (strain SAFR-032).